Consider the following 134-residue polypeptide: ATP synthase epsilon chain (134 aa).

This sequence belongs to the ATPase epsilon chain family. F-type ATPases have 2 components, CF(1) - the catalytic core - and CF(0) - the membrane proton channel. CF(1) has five subunits: alpha(3), beta(3), gamma(1), delta(1), epsilon(1). CF(0) has three main subunits: a, b and c.

Its subcellular location is the cell membrane. Functionally, produces ATP from ADP in the presence of a proton gradient across the membrane. In Listeria innocua serovar 6a (strain ATCC BAA-680 / CLIP 11262), this protein is ATP synthase epsilon chain.